The chain runs to 203 residues: LexA repressor 2 (203 aa).

A DNA-binding region (H-T-H motif) is located at residues 28-48 (MREIARHLNVNGTLGVAKHLE). Residues Ser122 and Lys159 each act as for autocatalytic cleavage activity in the active site.

The protein belongs to the peptidase S24 family. Homodimer.

The catalysed reaction is Hydrolysis of Ala-|-Gly bond in repressor LexA.. Represses a number of genes involved in the response to DNA damage (SOS response), including recA and lexA. In the presence of single-stranded DNA, RecA interacts with LexA causing an autocatalytic cleavage which disrupts the DNA-binding part of LexA, leading to derepression of the SOS regulon and eventually DNA repair. The sequence is that of LexA repressor 2 from Geobacter sulfurreducens (strain ATCC 51573 / DSM 12127 / PCA).